Consider the following 122-residue polypeptide: Putative MOB kinase activator-like 2B (122 aa).

Zn(2+)-binding residues include H69 and H74.

The protein belongs to the MOB1/phocein family.

It localises to the nucleus. Its subcellular location is the cytoplasm. The protein resides in the cytoskeleton. The protein localises to the phragmoplast. The polypeptide is Putative MOB kinase activator-like 2B (Arabidopsis thaliana (Mouse-ear cress)).